We begin with the raw amino-acid sequence, 181 residues long: MTPELAHDLKASVRTIPDYPKPGIMFRDITTLMGDPRSFRRAVDELVQPWAGSKIDKVAGIEARGFIIGGAIAHQVSSGFVPIRKKGKLPHTCVSMEYTLEYGTDHIEIHVDAITPGERVILVDDLIATGGTAEGAIKLLRQIGAEVVAACFIIDLPDLGGAAKVRSMGVPVRTLVEFGGH.

It belongs to the purine/pyrimidine phosphoribosyltransferase family. In terms of assembly, homodimer.

Its subcellular location is the cytoplasm. It catalyses the reaction AMP + diphosphate = 5-phospho-alpha-D-ribose 1-diphosphate + adenine. It functions in the pathway purine metabolism; AMP biosynthesis via salvage pathway; AMP from adenine: step 1/1. In terms of biological role, catalyzes a salvage reaction resulting in the formation of AMP, that is energically less costly than de novo synthesis. The protein is Adenine phosphoribosyltransferase of Rhodopseudomonas palustris (strain HaA2).